Here is a 338-residue protein sequence, read N- to C-terminus: UPF0284 protein PAE0372 (338 aa).

This sequence belongs to the UPF0284 family.

This Pyrobaculum aerophilum (strain ATCC 51768 / DSM 7523 / JCM 9630 / CIP 104966 / NBRC 100827 / IM2) protein is UPF0284 protein PAE0372.